A 97-amino-acid chain; its full sequence is Plastocyanin (97 aa).

Residues 1–97 form the Plastocyanin-like domain; sequence AEVKLGADDG…AGMKGEVTVT (97 aa). Cu cation-binding residues include histidine 37, cysteine 82, histidine 85, and methionine 90.

The protein belongs to the plastocyanin family. Cu(2+) serves as cofactor.

It localises to the plastid. The protein localises to the chloroplast thylakoid membrane. In terms of biological role, participates in electron transfer between P700 and the cytochrome b6-f complex in photosystem I. The chain is Plastocyanin (PETE) from Daucus carota (Wild carrot).